A 354-amino-acid polypeptide reads, in one-letter code: Uroporphyrinogen decarboxylase (354 aa).

Substrate contacts are provided by residues R27–R31, D77, Y154, T209, and H327.

Belongs to the uroporphyrinogen decarboxylase family. As to quaternary structure, homodimer.

The protein resides in the cytoplasm. The enzyme catalyses uroporphyrinogen III + 4 H(+) = coproporphyrinogen III + 4 CO2. It functions in the pathway porphyrin-containing compound metabolism; protoporphyrin-IX biosynthesis; coproporphyrinogen-III from 5-aminolevulinate: step 4/4. Its function is as follows. Catalyzes the decarboxylation of four acetate groups of uroporphyrinogen-III to yield coproporphyrinogen-III. This Pseudomonas entomophila (strain L48) protein is Uroporphyrinogen decarboxylase.